The following is a 587-amino-acid chain: Lamin-B1 (587 aa).

Polar residues predominate over residues 1–11; sequence MATATPVQQRA. The disordered stretch occupies residues 1–29; that stretch reads MATATPVQQRAGSRASAPATPFSPTRLSR. The residue at position 2 (A2) is an N-acetylalanine. Residues 2–34 are head; sequence ATATPVQQRAGSRASAPATPFSPTRLSRLQEKE. 2 positions are modified to phosphothreonine: T3 and T5. Residue R14 is modified to Omega-N-methylarginine. At S16 the chain carries Phosphoserine. T20 bears the Phosphothreonine mark. A Phosphoserine modification is found at S23. Residue T25 is modified to Phosphothreonine. Residue S28 is modified to Phosphoserine. An IF rod domain is found at 32–388; sequence EKEELRELND…KLLEGEEERL (357 aa). Residues 35–69 are coil 1A; that stretch reads ELRELNDRLAVYIDKVRSLETENSALQLQVTEREE. The interval 70 to 81 is linker 1; it reads VRGRELTGLKAL. Residues 82–215 are coil 1B; that stretch reads YETELADARR…EFRKNMYEEE (134 aa). A Glycyl lysine isopeptide (Lys-Gly) (interchain with G-Cter in SUMO2) cross-link involves residue K102. N6-acetyllysine is present on K111. K123 participates in a covalent cross-link: Glycyl lysine isopeptide (Lys-Gly) (interchain with G-Cter in SUMO2). S126 carries the post-translational modification Phosphoserine. A Glycyl lysine isopeptide (Lys-Gly) (interchain with G-Cter in SUMO2) cross-link involves residue K145. K157 is subject to N6-acetyllysine; alternate. K157 participates in a covalent cross-link: Glycyl lysine isopeptide (Lys-Gly) (interchain with G-Cter in SUMO2); alternate. Position 158 is a phosphoserine (S158). Residue K181 forms a Glycyl lysine isopeptide (Lys-Gly) (interchain with G-Cter in SUMO2) linkage. S200 and S232 each carry phosphoserine. Residues 216-243 are linker 2; sequence INETRRKHETRLVEVDSGRQIEYEYKLA. Glycyl lysine isopeptide (Lys-Gly) (interchain with G-Cter in SUMO2) cross-links involve residues K241 and K261. The tract at residues 244-386 is coil 2; that stretch reads QALHEMREQH…YRKLLEGEEE (143 aa). An N6-acetyllysine; alternate modification is found at K271. K271 participates in a covalent cross-link: Glycyl lysine isopeptide (Lys-Gly) (interchain with G-Cter in SUMO2); alternate. Phosphoserine is present on residues S278 and S302. A Glycyl lysine isopeptide (Lys-Gly) (interchain with G-Cter in SUMO2) cross-link involves residue K312. Residue K330 is modified to N6-acetyllysine; alternate. A Glycyl lysine isopeptide (Lys-Gly) (interchain with G-Cter in SUMO2); alternate cross-link involves residue K330. Phosphoserine occurs at positions 375 and 393. Residues 387–587 form a tail region; the sequence is RLKLSPSPSS…RASNKSCAIM (201 aa). Positions 390-409 are enriched in low complexity; it reads LSPSPSSRVTVSRASSSRSV. The tract at residues 390 to 432 is disordered; that stretch reads LSPSPSSRVTVSRASSSRSVRTTRGKRKRVDVEESEASSSVSI. T399 carries O-linked (GlcNAc) threonine glycosylation. At R413 the chain carries Omega-N-methylarginine. Residues 415–420 carry the Nuclear localization signal motif; that stretch reads KRKRVD. Positions 430–546 constitute an LTD domain; the sequence is VSISHSASAT…EEVAQRSTVF (117 aa). K483 is subject to N6-acetyllysine. K532 is covalently cross-linked (Glycyl lysine isopeptide (Lys-Gly) (interchain with G-Cter in SUMO2)). Position 534 is a phosphoserine (S534). A Glycyl lysine isopeptide (Lys-Gly) (interchain with G-Cter in SUMO2) cross-link involves residue K547. The interval 550-587 is disordered; sequence IPEEEEEEEEEPIGVPLEEERFHQQGTPRASNKSCAIM. Over residues 551–561 the composition is skewed to acidic residues; it reads PEEEEEEEEEP. Polar residues predominate over residues 573–587; the sequence is QQGTPRASNKSCAIM. A Phosphothreonine modification is found at T576. At C584 the chain carries Cysteine methyl ester. C584 carries the S-farnesyl cysteine lipid modification. Positions 585–587 are cleaved as a propeptide — removed in mature form; the sequence is AIM.

The protein belongs to the intermediate filament family. Homodimer. Lamin dimers then assemble into dimeric head-to-tail polymers. Ultimately, two head-to-tail polymers assemble laterally into a protofilament with a uniformly shaped rod of 3.5 nm in diameter. Interacts with SPAG4 and SEPT12. B-type lamins undergo a series of modifications, such as farnesylation and phosphorylation. Increased phosphorylation of the lamins occurs before envelope disintegration and probably plays a role in regulating lamin associations. In terms of processing, phosphorylation plays a key role in lamin organization, subcellular localization and nuclear envelope disintegration. Phosphorylation by CDK1 at Ser-23 and Ser-393 at the onset of mitosis drives lamin disassembly and nuclear envelope breakdown.

It is found in the nucleus lamina. Functionally, lamins are intermediate filament proteins that assemble into a filamentous meshwork, and which constitute the major components of the nuclear lamina, a fibrous layer on the nucleoplasmic side of the inner nuclear membrane. Lamins provide a framework for the nuclear envelope, bridging the nuclear envelope and chromatin, thereby playing an important role in nuclear assembly, chromatin organization, nuclear membrane and telomere dynamics. The structural integrity of the lamina is strictly controlled by the cell cycle, as seen by the disintegration and formation of the nuclear envelope in prophase and telophase, respectively. The protein is Lamin-B1 (Lmnb1) of Rattus norvegicus (Rat).